The sequence spans 211 residues: Shikimate kinase (211 aa).

The tract at residues 1-23 (MNASANLCAASDNDPQPGDQEAA) is disordered. 50 to 55 (GAGKTT) serves as a coordination point for ATP. A Mg(2+)-binding site is contributed by Thr54. 3 residues coordinate substrate: Asp72, Arg96, and Gly118. Arg156 contacts ATP. Arg175 is a substrate binding site.

This sequence belongs to the shikimate kinase family. As to quaternary structure, monomer. Requires Mg(2+) as cofactor.

The protein localises to the cytoplasm. It carries out the reaction shikimate + ATP = 3-phosphoshikimate + ADP + H(+). It participates in metabolic intermediate biosynthesis; chorismate biosynthesis; chorismate from D-erythrose 4-phosphate and phosphoenolpyruvate: step 5/7. Catalyzes the specific phosphorylation of the 3-hydroxyl group of shikimic acid using ATP as a cosubstrate. This is Shikimate kinase from Bordetella bronchiseptica (strain ATCC BAA-588 / NCTC 13252 / RB50) (Alcaligenes bronchisepticus).